The primary structure comprises 61 residues: MAKKSMIAKSERPAKFSTQEYTRCERCGRPHSVYRKFHLCRICLRDLAHKGQIPGMKKASW.

Cys24, Cys27, Cys40, and Cys43 together coordinate Zn(2+).

Belongs to the universal ribosomal protein uS14 family. Zinc-binding uS14 subfamily. In terms of assembly, part of the 30S ribosomal subunit. Contacts proteins S3 and S10. Zn(2+) is required as a cofactor.

Functionally, binds 16S rRNA, required for the assembly of 30S particles and may also be responsible for determining the conformation of the 16S rRNA at the A site. In Limosilactobacillus fermentum (strain NBRC 3956 / LMG 18251) (Lactobacillus fermentum), this protein is Small ribosomal subunit protein uS14.